The following is a 132-amino-acid chain: Transmembrane protein 170B (132 aa).

At 1–37 (MRAEGADHSMINLSVQQVLSLWAHGTVLRNLTEMWYW) the chain is on the extracellular side. Asn12 is a glycosylation site (N-linked (GlcNAc...) asparagine). A helical membrane pass occupies residues 38 to 58 (IFLWALFSSLFVHGAAGVLMF). Residues 59-68 (VMLQRHRQGR) lie on the Cytoplasmic side of the membrane. A helical membrane pass occupies residues 69–89 (VLSIIAVSIGFLASVTGAMIT). Residues 90–104 (SAAVAGIYRVAGKNM) are Extracellular-facing. Residues 105-125 (APLEALVWGVGQTVLTLIISF) traverse the membrane as a helical segment. Residues 126–132 (SRILATL) lie on the Cytoplasmic side of the membrane.

The protein belongs to the TMEM170 family. As to quaternary structure, interacts with CTNNB1.

It localises to the cell membrane. This Rattus norvegicus (Rat) protein is Transmembrane protein 170B (Tmem170b).